A 305-amino-acid chain; its full sequence is MTQPTVTADDPDLSHVGPRDKAEILAQALPYIRKFHGKTMVIKYGGNAMTDPALQADFAEDVVLLKLVGMNPVVVHGGGPQIEAALNRLGKKGHFIQGMRVTDEETMEVVEWVLAGQVQQDIVGLINQAGGKAVGLTGRDGGLIRAQKLKMVDKDDPAKEHDIGFVGDIVSIDPSVVKALQDDAFIPVISPIGFGESNESYNINADVVAGKLATVLKAEKLVLLTNTPGVLNKAGELLTDLTAREIDDLFADGTISGGMLPKIEGALDAAKSGVNSVHIIDGRVPHAMLLEILTDQAYGTMIRSH.

Substrate-binding positions include Gly78–Gly79, Arg100, and Asn202.

It belongs to the acetylglutamate kinase family. ArgB subfamily.

It is found in the cytoplasm. The catalysed reaction is N-acetyl-L-glutamate + ATP = N-acetyl-L-glutamyl 5-phosphate + ADP. It functions in the pathway amino-acid biosynthesis; L-arginine biosynthesis; N(2)-acetyl-L-ornithine from L-glutamate: step 2/4. Its function is as follows. Catalyzes the ATP-dependent phosphorylation of N-acetyl-L-glutamate. The chain is Acetylglutamate kinase from Polaromonas sp. (strain JS666 / ATCC BAA-500).